A 258-amino-acid chain; its full sequence is 3-deoxy-manno-octulosonate cytidylyltransferase (258 aa).

This sequence belongs to the KdsB family.

The protein resides in the cytoplasm. It catalyses the reaction 3-deoxy-alpha-D-manno-oct-2-ulosonate + CTP = CMP-3-deoxy-beta-D-manno-octulosonate + diphosphate. It participates in nucleotide-sugar biosynthesis; CMP-3-deoxy-D-manno-octulosonate biosynthesis; CMP-3-deoxy-D-manno-octulosonate from 3-deoxy-D-manno-octulosonate and CTP: step 1/1. Its pathway is bacterial outer membrane biogenesis; lipopolysaccharide biosynthesis. Its function is as follows. Activates KDO (a required 8-carbon sugar) for incorporation into bacterial lipopolysaccharide in Gram-negative bacteria. The chain is 3-deoxy-manno-octulosonate cytidylyltransferase from Parvibaculum lavamentivorans (strain DS-1 / DSM 13023 / NCIMB 13966).